We begin with the raw amino-acid sequence, 1127 residues long: Ras guanine nucleotide exchange factor F (1127 aa).

Disordered stretches follow at residues 1 to 82 (MTDK…SLLN) and 96 to 154 (NSGG…SSSS). 2 stretches are compositionally biased toward low complexity: residues 23–53 (NQPS…TTSP) and 67–82 (NNNN…SLLN). Positions 122–132 (RTSTTLAQFSG) are enriched in polar residues. A compositionally biased stretch (low complexity) spans 133-154 (SSLPNTENSSPPPSSSLISSSS). 5 Kelch repeats span residues 212–261 (GFYL…LYNN), 262–311 (SMYI…VESG), 313–366 (MIVF…MHKG), 367–418 (NMYV…LFQD), and 420–469 (IFIS…VKGN). One can recognise a LisH domain in the interval 557 to 589 (SHQFVLQLIMEYLERNTYHKVIAAIQKESGVLH). An N-terminal Ras-GEF domain is found at 673–804 (NKVQIKAATF…KLRELKKKLQ (132 aa)). In terms of domain architecture, Ras-GEF spans 835 to 1062 (DELEIARQMT…YDLNLLSESL (228 aa)). A disordered region spans residues 1090 to 1127 (LGSARELNNSNRDSNNITGSSSNNNSNSSNSLSPIVKL). Positions 1103 to 1127 (SNNITGSSSNNNSNSSNSLSPIVKL) are enriched in low complexity.

Functionally, promotes the exchange of Ras-bound GDP by GTP. The polypeptide is Ras guanine nucleotide exchange factor F (gefF) (Dictyostelium discoideum (Social amoeba)).